The following is a 1596-amino-acid chain: Transcription factor Zelda (1596 aa).

3 disordered regions span residues 1-143, 209-273, and 490-530; these read MTSI…QQQQ, SGLG…GGAA, and TSPA…SVLP. Low complexity predominate over residues 13–24; the sequence is AAEALASSSATD. Gly residues predominate over residues 25–53; the sequence is SGGGGAGGGGGGGGGGSGGPGAGGTGGVG. The span at 60-72 shows a compositional bias: polar residues; that stretch reads NATISAAADSSDN. 2 stretches are compositionally biased toward low complexity: residues 73-123 and 226-267; these read QPGT…ITHQ and SAPS…QTPG. A compositionally biased stretch (gly residues) spans 501–518; the sequence is GGPGQEGAAGAAPGGGYR. The C2H2-type 1 zinc-finger motif lies at 552-576; it reads YNCTACNKWFTSSGHLKRHYNTTLH. 4 disordered regions span residues 578–813, 825–945, 1017–1074, and 1252–1322; these read NAVK…TTTA, EDSN…MGML, GEQH…MPLT, and QMQH…TTLP. A compositionally biased stretch (low complexity) spans 610-634; that stretch reads RGNAAAAAAAAAAAASASGQGQQQQ. The span at 635–653 shows a compositional bias: pro residues; the sequence is PPIPPPPANVPPPEPPRSP. Positions 656–668 are enriched in gly residues; it reads YGGGGGLGVGAMG. Polar residues predominate over residues 673–682; it reads SQYSASPSPT. Composition is skewed to low complexity over residues 683–709 and 719–753; these read QQQQ…GYGY and NASP…HHNS. Residues 768–781 are compositionally biased toward polar residues; it reads PHNNNTTQMPSSQM. The span at 796-813 shows a compositional bias: low complexity; the sequence is TTTRAPQITTTATTTTTA. Basic residues predominate over residues 830–840; that stretch reads THTHTHTHPNH. Residues 849 to 858 show a composition bias toward low complexity; it reads SSSSSSSMAT. Positions 864-877 are enriched in basic and acidic residues; it reads QELRDQEQADDHLH. Over residues 879–916 the composition is skewed to low complexity; that stretch reads HQQASQQYLLSARHYHSSTPNTLSSSNTNPSTPSSNSP. Residues 904 to 1297 form a transactivation activation domain (TAD) region; it reads SNTNPSTPSS…PLAKKRRGGN (394 aa). Polar residues predominate over residues 921-932; the sequence is RQEQQGTDFSRT. The segment covering 933–944 has biased composition (pro residues); it reads TPPPQPLPPMGM. Over residues 1019-1036 the composition is skewed to basic and acidic residues; sequence QHQRQEADHHQQQRELHQ. Low complexity-rich tracts occupy residues 1037 to 1062 and 1252 to 1275; these read LDQQ…SPTS and QMQH…QQQQ. 2 stretches are compositionally biased toward polar residues: residues 1276 to 1286 and 1309 to 1322; these read ILADQTQTMAQ and SSVG…TTLP. The C2H2-type 2 zinc-finger motif lies at 1326 to 1349; that stretch reads IKCLECDKEFTKNCYLTQHNKSFH. The segment at 1355–1378 adopts a C2H2-type 3; degenerate zinc-finger fold; it reads FRCQKCGKRFQSEDVYTTHLGRHR. 2 consecutive C2H2-type zinc fingers follow at residues 1384–1407 and 1413–1435; these read HKCE…EAIH and HMCD…LETH.

In terms of tissue distribution, zygotically expressed in the developing embryonic germ layers, nervous system, imaginal disk primordia and in larval wing and eye disks. Detected in the germline cells of the ovary, in unfertilized eggs and throughout early development. Later, it becomes mostly restricted to the nervous system and specific head regions. Also expressed in imaginal wing disks in third instar larvae.

The protein localises to the nucleus. It is found in the chromosome. Its function is as follows. Transcription factor required for zygotic genome activation (ZGA), a critical event in early embryonic development during which the developmental control passes from maternally provided mRNAs to the expression of the zygotic genome after fertilization. Binds to regulatory DNA sequences containing a 5'-CAGGTAG-3' sequence motif, which are highly enriched among developmental enhancers. Within 1 hour into development, or by the embryo's 8th nuclear cycle, binds the majority of its motifs genome-wide. Zelda-binding promotes nucleosome depletion and chromatin accessibility, thereby facilitating the binding of patterning transcription factors, including the binding of the dorsoventral patterning transcription factors dorsal (dl) and twist (twi), and the anteroposterior patterning transcription factors bicoid (bcd) and caudal (cad). Promotes the activity of patterning transcription factors, such as bcd and dl, by lowering the concentration threshold required for transcriptional activation. Required both for the earliest (minor) and major waves of transcription during ZGA. Also involved in maternal mRNA clearance during the maternal-to-zygote transition by promoting expression of microRNAs (miRNAs), such as miR-1, miR-9a and miR-309, which mediate degradation of maternally-loaded RNAs. Also involved in post-blastoderm development: nvolved in nervous system development by maintaining neuroblasts in an undifferentiated state and equired for wing disk development. In terms of biological role, constitutes the main isoform expressed throughout development. Transcription factor required for zygotic genome activation (ZGA). Functionally, acts as a dominant negative inhibitor of transcription factor activity of isoform A. This chain is Transcription factor Zelda, found in Drosophila melanogaster (Fruit fly).